Consider the following 609-residue polypeptide: MKVINLFASSIITTLSMLTLPIVLTSTSIYKNKLYPQYVKTAISYAFMISMIPTTMFIYSGQEMIISNWHWMTIQTMKLTLSFKLDHFSMIFVPVALFVTWSIMEFSMWYMHSDPFINRFFKYLLMFLITMMILVTANNLFQLFIGWEGVGIMSFLLIGWWHGRTDANTAALQAVLYNRIGDVGFIMAMAWFLINLNTWELQQIFISHHNNLNVPLMGLLLAATGKSAQFGLHPWLPSAMEGPTPVSALLHSSTMVVAGVFLLIRFHPLMEHNTMMQTTTLCLGAITTLFTAICALTQNDIKKIIAFSTSSQLGLMIVTIGINQPHLAFLHICTHAFFKAMLFLCSGSIIHNLNDEQDIRKMGGLYKVLPFTTTSLIVGSLALTGMPFLTGFYSKDLIIETANTSYTNAWALLLTLVATSMTAAYSTRIMFFALLDQPRFNPMITINENSPLLINPIKRLLLGSIFAGYLISYNITPTSTPQMTMPHYLKLMALTVTLLGFILALELNLTSQSLKLKHPSNLFKFSNLLGYFPTIIHRYMPMVNLSASQKLASTLLDAIWLENALPKSISYFHMKSSVTISNQKGLIKLYFLSFIITLILALMMINSHE.

16 helical membrane passes run 3–23 (VINL…LPIV), 41–61 (TAIS…IYSG), 90–110 (MIFV…SMWY), 115–135 (PFIN…MILV), 140–160 (LFQL…LIGW), 174–194 (AVLY…WFLI), 214–236 (VPLM…HPWL), 244–264 (TPVS…FLLI), 276–296 (MQTT…ICAL), 304–323 (IIAF…IGIN), 328–350 (AFLH…GSII), 368–388 (VLPF…GMPF), 410–432 (WALL…IMFF), 460–480 (LLLG…PTST), 491–511 (LMAL…NLTS), and 585–605 (GLIK…LMMI).

This sequence belongs to the complex I subunit 5 family. In terms of assembly, core subunit of respiratory chain NADH dehydrogenase (Complex I) which is composed of 45 different subunits.

It is found in the mitochondrion inner membrane. The enzyme catalyses a ubiquinone + NADH + 5 H(+)(in) = a ubiquinol + NAD(+) + 4 H(+)(out). Functionally, core subunit of the mitochondrial membrane respiratory chain NADH dehydrogenase (Complex I) which catalyzes electron transfer from NADH through the respiratory chain, using ubiquinone as an electron acceptor. Essential for the catalytic activity and assembly of complex I. The chain is NADH-ubiquinone oxidoreductase chain 5 (MT-ND5) from Halichoerus grypus (Gray seal).